The following is a 75-amino-acid chain: RNA-binding protein Hfq (75 aa).

Residues 9 to 69 (DQFLNQLRKE…ISTFAPERNI (61 aa)) form the Sm domain.

This sequence belongs to the Hfq family. As to quaternary structure, homohexamer.

Its function is as follows. RNA chaperone that binds small regulatory RNA (sRNAs) and mRNAs to facilitate mRNA translational regulation in response to envelope stress, environmental stress and changes in metabolite concentrations. Also binds with high specificity to tRNAs. This Geobacillus kaustophilus (strain HTA426) protein is RNA-binding protein Hfq.